Here is an 87-residue protein sequence, read N- to C-terminus: Small ribosomal subunit protein uS17 (87 aa).

Belongs to the universal ribosomal protein uS17 family. In terms of assembly, part of the 30S ribosomal subunit.

Functionally, one of the primary rRNA binding proteins, it binds specifically to the 5'-end of 16S ribosomal RNA. This chain is Small ribosomal subunit protein uS17, found in Bacillus thuringiensis (strain Al Hakam).